Here is an 81-residue protein sequence, read N- to C-terminus: Sec-independent protein translocase protein TatA (81 aa).

Residues M1 to G21 traverse the membrane as a helical segment. The segment at K41–G81 is disordered.

It belongs to the TatA/E family. The Tat system comprises two distinct complexes: a TatABC complex, containing multiple copies of TatA, TatB and TatC subunits, and a separate TatA complex, containing only TatA subunits. Substrates initially bind to the TatABC complex, which probably triggers association of the separate TatA complex to form the active translocon.

It localises to the cell inner membrane. Its function is as follows. Part of the twin-arginine translocation (Tat) system that transports large folded proteins containing a characteristic twin-arginine motif in their signal peptide across membranes. TatA could form the protein-conducting channel of the Tat system. The chain is Sec-independent protein translocase protein TatA from Beijerinckia indica subsp. indica (strain ATCC 9039 / DSM 1715 / NCIMB 8712).